We begin with the raw amino-acid sequence, 37 residues long: Large ribosomal subunit protein bL36 (37 aa).

The protein belongs to the bacterial ribosomal protein bL36 family.

This chain is Large ribosomal subunit protein bL36, found in Marinomonas sp. (strain MWYL1).